The sequence spans 106 residues: Large ribosomal subunit protein uL24 (106 aa).

This sequence belongs to the universal ribosomal protein uL24 family. Part of the 50S ribosomal subunit.

Functionally, one of two assembly initiator proteins, it binds directly to the 5'-end of the 23S rRNA, where it nucleates assembly of the 50S subunit. Its function is as follows. One of the proteins that surrounds the polypeptide exit tunnel on the outside of the subunit. This is Large ribosomal subunit protein uL24 from Thermosipho melanesiensis (strain DSM 12029 / CIP 104789 / BI429).